The primary structure comprises 314 residues: DNA-directed RNA polymerase subunit alpha (314 aa).

The tract at residues 1 to 228 is alpha N-terminal domain (alpha-NTD); it reads MIEIEKPRIE…EHLNIFVSLT (228 aa). The segment at 245-314 is alpha C-terminal domain (alpha-CTD); the sequence is KEKVLEMSIE…DLGLGLRKED (70 aa).

This sequence belongs to the RNA polymerase alpha chain family. In terms of assembly, homodimer. The RNAP catalytic core consists of 2 alpha, 1 beta, 1 beta' and 1 omega subunit. When a sigma factor is associated with the core the holoenzyme is formed, which can initiate transcription.

It catalyses the reaction RNA(n) + a ribonucleoside 5'-triphosphate = RNA(n+1) + diphosphate. DNA-dependent RNA polymerase catalyzes the transcription of DNA into RNA using the four ribonucleoside triphosphates as substrates. The protein is DNA-directed RNA polymerase subunit alpha of Staphylococcus epidermidis (strain ATCC 35984 / DSM 28319 / BCRC 17069 / CCUG 31568 / BM 3577 / RP62A).